A 489-amino-acid chain; its full sequence is MNFTPTRTPICRKISFASKRGAGSGFGDTNRWKKMADSMESTPLPSVEDRLAVLCPSQELLEYYQKKMANCESENEDLLKKLELYREACEEQHKLEWNLQQREEEIAELQKALSDMQVCLFQEREHVLRLYSENDRLRIRELEDKKKIQNLLALVGPDAGEVTYFHKEPPHRVSILQKTLQAAVACEPSASKADPGVSKRQVRIKDKEGISERHQRDTEMLLLQVEALQAQLGEQTKLSREQVEGLMEDRRIRVEEIQVQHQRNQEKIMELTKSLHHTQELLYESTKDFLQLKFENQNKEKVWMLEKDHLMSKITQYRAQCKKKEDKLGKVVPILHESHHTQNEYIKSLKDKLIQEKKLSNMYQEQCISLEEELARIREEEGVRREIFKDRSNKMGKRLQIMTKRYQALEHRRALEVEGFKTDIKSLRQKLRDLEQMLYKATMNNTHGDQDLAMLCEVRDSNRRAHKIQGELKNLKSKVFGLENALRLC.

Phosphoserine is present on S38. 2 coiled-coil regions span residues 57-120 and 212-487; these read SQEL…QVCL and ERHQ…NALR.

This Mus musculus (Mouse) protein is Coiled-coil domain-containing protein 77 (Ccdc77).